The chain runs to 194 residues: Superoxide dismutase [Cu-Zn] (194 aa).

Residues 1–20 (MTRPLALIIFLVAILTNTDP) form the signal peptide. 2 residues coordinate Cu cation: His-85 and His-104. A disulfide bond links Cys-96 and Cys-188. Residues His-104, His-112, His-121, and Asp-124 each contribute to the Zn(2+) site. Cu cation is bound at residue His-162.

It belongs to the Cu-Zn superoxide dismutase family. In terms of assembly, homodimer. It depends on Cu cation as a cofactor. Requires Zn(2+) as cofactor.

It carries out the reaction 2 superoxide + 2 H(+) = H2O2 + O2. In terms of biological role, destroys radicals which are normally produced within the cells and which are toxic to biological systems. The sequence is that of Superoxide dismutase [Cu-Zn] from Ramazzottius varieornatus (Water bear).